The primary structure comprises 452 residues: Bifunctional protein GlmU (452 aa).

The segment at 1–232 (MTTNAPGAVI…EADMQGVNSR (232 aa)) is pyrophosphorylase. UDP-N-acetyl-alpha-D-glucosamine contacts are provided by residues 11–14 (LAAG), Lys-25, Gln-78, and 83–84 (GT). A Mg(2+)-binding site is contributed by Asp-108. 3 residues coordinate UDP-N-acetyl-alpha-D-glucosamine: Gly-144, Glu-158, and Asn-230. Residue Asn-230 coordinates Mg(2+). The segment at 233-253 (ADLAAAEATMQQRLRMAAMAG) is linker. The segment at 254-452 (GVTMLDPSSV…HKDKKKASGE (199 aa)) is N-acetyltransferase. The UDP-N-acetyl-alpha-D-glucosamine site is built by Arg-319 and Lys-337. His-349 acts as the Proton acceptor in catalysis. 2 residues coordinate UDP-N-acetyl-alpha-D-glucosamine: Tyr-352 and Asn-363. Residues Ala-366, 372–373 (NY), Ser-391, Ser-409, and Arg-426 each bind acetyl-CoA.

In the N-terminal section; belongs to the N-acetylglucosamine-1-phosphate uridyltransferase family. It in the C-terminal section; belongs to the transferase hexapeptide repeat family. In terms of assembly, homotrimer. Mg(2+) serves as cofactor.

The protein localises to the cytoplasm. The catalysed reaction is alpha-D-glucosamine 1-phosphate + acetyl-CoA = N-acetyl-alpha-D-glucosamine 1-phosphate + CoA + H(+). It carries out the reaction N-acetyl-alpha-D-glucosamine 1-phosphate + UTP + H(+) = UDP-N-acetyl-alpha-D-glucosamine + diphosphate. It participates in nucleotide-sugar biosynthesis; UDP-N-acetyl-alpha-D-glucosamine biosynthesis; N-acetyl-alpha-D-glucosamine 1-phosphate from alpha-D-glucosamine 6-phosphate (route II): step 2/2. Its pathway is nucleotide-sugar biosynthesis; UDP-N-acetyl-alpha-D-glucosamine biosynthesis; UDP-N-acetyl-alpha-D-glucosamine from N-acetyl-alpha-D-glucosamine 1-phosphate: step 1/1. The protein operates within bacterial outer membrane biogenesis; LPS lipid A biosynthesis. In terms of biological role, catalyzes the last two sequential reactions in the de novo biosynthetic pathway for UDP-N-acetylglucosamine (UDP-GlcNAc). The C-terminal domain catalyzes the transfer of acetyl group from acetyl coenzyme A to glucosamine-1-phosphate (GlcN-1-P) to produce N-acetylglucosamine-1-phosphate (GlcNAc-1-P), which is converted into UDP-GlcNAc by the transfer of uridine 5-monophosphate (from uridine 5-triphosphate), a reaction catalyzed by the N-terminal domain. This is Bifunctional protein GlmU from Parvibaculum lavamentivorans (strain DS-1 / DSM 13023 / NCIMB 13966).